Consider the following 668-residue polypeptide: Pentatricopeptide repeat-containing protein CRP1, chloroplastic (668 aa).

A chloroplast-targeting transit peptide spans 1–64 (MPASLLPPTF…SASLTSPSPP (64 aa)). PPR repeat units lie at residues 154–188 (SPLL…DFLP), 189–226 (DLAS…RLEP), 227–261 (DAPL…GLTP), 262–297 (RSNA…EIKP), 298–332 (RTRA…GVAP), 333–367 (DEAT…GVKP), 368–402 (SSYV…GVRP), 403–437 (DRHF…GIEP), 438–472 (DVVT…NCPP), 473–507 (GTTT…GLVP), 508–542 (NIIT…GLKP), 543–577 (SPTM…GLEV), 578–612 (SILV…GLRP), and 613–647 (DVIT…GCAP).

Belongs to the PPR family. P subfamily. Component of a multisubunit complex.

The protein resides in the plastid. It is found in the chloroplast stroma. In terms of biological role, required for the translation of the chloroplast petA and petD mRNAs. Required for the processing of the petD mRNA from a polycistronic precursor. Binds with high affinity to the 5'-UTR of the chloroplastic petA transcript. Activates psaC and petA translation by binding their 5'-UTRs. The chain is Pentatricopeptide repeat-containing protein CRP1, chloroplastic from Zea mays (Maize).